Here is a 118-residue protein sequence, read N- to C-terminus: Acidic elicitin A1 (118 aa).

The N-terminal stretch at 1 to 20 (MNFRALFAATVAALVGSTSA) is a signal peptide. 3 disulfides stabilise this stretch: C23/C91, C47/C76, and C71/C115.

It belongs to the elicitin family.

The protein resides in the secreted. In terms of biological role, induces local and distal defense responses (incompatible hypersensitive reaction) in plants from the solanaceae and cruciferae families. Elicits leaf necrosis and causes the accumulation of pathogenesis-related proteins. Might interact with the lipidic molecules of the plasma membrane. The sequence is that of Acidic elicitin A1 (B14) from Phytophthora cryptogea.